The following is a 389-amino-acid chain: S-adenosylmethionine synthase (389 aa).

His-15 lines the ATP pocket. Asp-17 lines the Mg(2+) pocket. Glu-43 provides a ligand contact to K(+). Residues Glu-56 and Gln-99 each coordinate L-methionine. Residues 99 to 109 (QSSDIQYSIDH) are flexible loop. Residues 166–168 (DAK), 232–233 (RF), Asp-241, 247–248 (RK), Ser-264, and Lys-268 contribute to the ATP site. Asp-241 is a binding site for L-methionine. Lys-272 provides a ligand contact to L-methionine.

Belongs to the AdoMet synthase family. As to quaternary structure, homotetramer; dimer of dimers. Mg(2+) is required as a cofactor. The cofactor is K(+).

The protein resides in the cytoplasm. The catalysed reaction is L-methionine + ATP + H2O = S-adenosyl-L-methionine + phosphate + diphosphate. It participates in amino-acid biosynthesis; S-adenosyl-L-methionine biosynthesis; S-adenosyl-L-methionine from L-methionine: step 1/1. Catalyzes the formation of S-adenosylmethionine (AdoMet) from methionine and ATP. The overall synthetic reaction is composed of two sequential steps, AdoMet formation and the subsequent tripolyphosphate hydrolysis which occurs prior to release of AdoMet from the enzyme. The polypeptide is S-adenosylmethionine synthase (Blochmanniella pennsylvanica (strain BPEN)).